The following is a 417-amino-acid chain: Phosphoribosylamine--glycine ligase (417 aa).

The ATP-grasp domain maps to 108–307 (KRIMDEAGVP…LSTLLFAAAT (200 aa)). 134–188 (LDEFGAPYVVKADGLAAGKGVIVTEDRAAALAHAARYLTHGSVLVEEFLDGEEVS) lines the ATP pocket. Mg(2+)-binding residues include glutamate 277 and asparagine 279.

It belongs to the GARS family. Requires Mg(2+) as cofactor. It depends on Mn(2+) as a cofactor.

The enzyme catalyses 5-phospho-beta-D-ribosylamine + glycine + ATP = N(1)-(5-phospho-beta-D-ribosyl)glycinamide + ADP + phosphate + H(+). It participates in purine metabolism; IMP biosynthesis via de novo pathway; N(1)-(5-phospho-D-ribosyl)glycinamide from 5-phospho-alpha-D-ribose 1-diphosphate: step 2/2. This chain is Phosphoribosylamine--glycine ligase, found in Leifsonia xyli subsp. xyli (strain CTCB07).